We begin with the raw amino-acid sequence, 334 residues long: Histo-blood group ABO system transferase 2 (334 aa).

The Cytoplasmic segment spans residues 1-15 (MKDLRFGRLKCYSLH). Residues 16–36 (LGILPLTVLVLVFFCFVCLSL) traverse the membrane as a helical; Signal-anchor for type II membrane protein segment. Topologically, residues 37–334 (RSQEWGHPGA…VPKNHQAIRN (298 aa)) are lumenal. Residue asparagine 94 is glycosylated (N-linked (GlcNAc...) asparagine). UDP-N-acetyl-alpha-D-galactosamine contacts are provided by residues 102 to 104 (FAV), tyrosine 107, and 192 to 194 (DVD). Positions 192 and 194 each coordinate Mn(2+). Histidine 214, threonine 226, glutamate 284, and aspartate 307 together coordinate an alpha-L-fucosyl-(1-&gt;2)-beta-D-galactosyl derivative. Glutamate 284 functions as the Nucleophile in the catalytic mechanism.

This sequence belongs to the glycosyltransferase 6 family. Requires Mn(2+) as cofactor. Large intestine, caecum, stomach, pancreas, submaxillary gland and kidney (at protein level). Ubiquitous.

Its subcellular location is the golgi apparatus. The protein resides in the golgi stack membrane. It localises to the secreted. It catalyses the reaction an alpha-L-fucosyl-(1-&gt;2)-beta-D-galactosyl derivative + UDP-N-acetyl-alpha-D-galactosamine = an N-acetyl-alpha-D-galactosaminyl-(1-&gt;3)-[alpha-L-fucosyl-(1-&gt;2)]-beta-D-galactosyl derivative + UDP + H(+). It carries out the reaction an alpha-L-fucosyl-(1-&gt;2)-beta-D-galactosyl derivative + UDP-alpha-D-galactose = an alpha-D-galactosyl-(1-&gt;3)-[alpha-L-fucosyl-(1-&gt;2)]-beta-D-galactosyl derivative + UDP + H(+). It participates in protein modification; protein glycosylation. Possesses strong B transferase activity and weak A transferase activity. The sequence is that of Histo-blood group ABO system transferase 2 (Abo2) from Rattus norvegicus (Rat).